We begin with the raw amino-acid sequence, 534 residues long: Glucose-6-phosphate isomerase (534 aa).

The active-site Proton donor is glutamate 356. Residues histidine 387 and lysine 502 contribute to the active site.

It belongs to the GPI family.

It localises to the cytoplasm. It catalyses the reaction alpha-D-glucose 6-phosphate = beta-D-fructose 6-phosphate. It functions in the pathway carbohydrate biosynthesis; gluconeogenesis. The protein operates within carbohydrate degradation; glycolysis; D-glyceraldehyde 3-phosphate and glycerone phosphate from D-glucose: step 2/4. Its function is as follows. Catalyzes the reversible isomerization of glucose-6-phosphate to fructose-6-phosphate. The protein is Glucose-6-phosphate isomerase of Desulfotalea psychrophila (strain LSv54 / DSM 12343).